The primary structure comprises 211 residues: Leucine efflux protein (211 aa).

Transmembrane regions (helical) follow at residues 5–25 (FGVL…LVPG), 49–69 (GVFI…AALI), 72–92 (TPVL…WLGG), 122–142 (VLSL…VQFI), 153–173 (FLIL…FLIF), and 191–211 (LGNG…ASLH).

Belongs to the Rht family.

The protein resides in the cell inner membrane. It catalyses the reaction L-leucine(in) + H(+)(out) = L-leucine(out) + H(+)(in). In terms of biological role, exporter of leucine. In Enterobacter sp. (strain 638), this protein is Leucine efflux protein (leuE).